We begin with the raw amino-acid sequence, 658 residues long: Protein kinase and PP2C-like domain-containing protein (658 aa).

One can recognise a Protein kinase domain in the interval 30–314 (FTLLSPIAKG…DNVVLELESI (285 aa)). Residues 36–44 (IAKGSESVV) and K57 contribute to the ATP site. Catalysis depends on D149, which acts as the Proton acceptor. Residues 392-648 (SCGSFATCGR…DNITVIVVFL (257 aa)) form the PPM-type phosphatase domain. Mn(2+)-binding residues include D428, G429, D599, and D639.

It in the N-terminal section; belongs to the protein kinase superfamily. Ser/Thr protein kinase family. This sequence in the C-terminal section; belongs to the PP2C family. The cofactor is Mg(2+). It depends on Mn(2+) as a cofactor.

It carries out the reaction L-seryl-[protein] + ATP = O-phospho-L-seryl-[protein] + ADP + H(+). The catalysed reaction is L-threonyl-[protein] + ATP = O-phospho-L-threonyl-[protein] + ADP + H(+). It catalyses the reaction O-phospho-L-seryl-[protein] + H2O = L-seryl-[protein] + phosphate. The enzyme catalyses O-phospho-L-threonyl-[protein] + H2O = L-threonyl-[protein] + phosphate. The protein is Protein kinase and PP2C-like domain-containing protein of Arabidopsis thaliana (Mouse-ear cress).